A 217-amino-acid chain; its full sequence is Large ribosomal subunit protein bL25 (217 aa).

A compositionally biased stretch (low complexity) spans 195–211 (PAEGAAAAPAKGAAKGA). The tract at residues 195–217 (PAEGAAAAPAKGAAKGAAKGGKK) is disordered.

It belongs to the bacterial ribosomal protein bL25 family. CTC subfamily. Part of the 50S ribosomal subunit; part of the 5S rRNA/L5/L18/L25 subcomplex. Contacts the 5S rRNA. Binds to the 5S rRNA independently of L5 and L18.

This is one of the proteins that binds to the 5S RNA in the ribosome where it forms part of the central protuberance. The sequence is that of Large ribosomal subunit protein bL25 from Acidiphilium cryptum (strain JF-5).